A 46-amino-acid polypeptide reads, in one-letter code: Transcriptional regulator SEHBP (46 aa).

Interacts with histone H2B. Also interacts with chromatin-binding proteins HMGN1 and HMGN3.

The protein localises to the nucleus. Its subcellular location is the cytoplasm. In terms of biological role, plays a role in transcription regulation. The protein is Transcriptional regulator SEHBP of Homo sapiens (Human).